Consider the following 379-residue polypeptide: UDP-N-acetylglucosamine--N-acetylmuramyl-(pentapeptide) pyrophosphoryl-undecaprenol N-acetylglucosamine transferase (379 aa).

Residues 10–12 (TGG), asparagine 124, and arginine 165 each bind UDP-N-acetyl-alpha-D-glucosamine. A disordered region spans residues 174–195 (TRDQGPGIRDQEKHMTDSTGPA). Residues serine 211, isoleucine 266, and glutamine 311 each coordinate UDP-N-acetyl-alpha-D-glucosamine.

Belongs to the glycosyltransferase 28 family. MurG subfamily.

The protein localises to the cell inner membrane. It catalyses the reaction di-trans,octa-cis-undecaprenyl diphospho-N-acetyl-alpha-D-muramoyl-L-alanyl-D-glutamyl-meso-2,6-diaminopimeloyl-D-alanyl-D-alanine + UDP-N-acetyl-alpha-D-glucosamine = di-trans,octa-cis-undecaprenyl diphospho-[N-acetyl-alpha-D-glucosaminyl-(1-&gt;4)]-N-acetyl-alpha-D-muramoyl-L-alanyl-D-glutamyl-meso-2,6-diaminopimeloyl-D-alanyl-D-alanine + UDP + H(+). It participates in cell wall biogenesis; peptidoglycan biosynthesis. Functionally, cell wall formation. Catalyzes the transfer of a GlcNAc subunit on undecaprenyl-pyrophosphoryl-MurNAc-pentapeptide (lipid intermediate I) to form undecaprenyl-pyrophosphoryl-MurNAc-(pentapeptide)GlcNAc (lipid intermediate II). In Pelobacter propionicus (strain DSM 2379 / NBRC 103807 / OttBd1), this protein is UDP-N-acetylglucosamine--N-acetylmuramyl-(pentapeptide) pyrophosphoryl-undecaprenol N-acetylglucosamine transferase.